Consider the following 323-residue polypeptide: Voltage-dependent calcium channel gamma-2 subunit (323 aa).

The helical transmembrane segment at 10-30 (MLLTTVGAFAAFSLMTIAVGT) threads the bilayer. N-linked (GlcNAc...) asparagine glycosylation occurs at Asn-48. The next 3 helical transmembrane spans lie at 104 to 124 (SSIF…CIAA), 134 to 154 (IILS…IGII), and 182 to 202 (FGAL…HMFI). The segment at 233 to 261 (YQRRSRSSSRSTEPSHSRDASPVGIKGFN) is disordered. Position 253 is a phosphoserine (Ser-253). At Tyr-271 the chain carries Phosphotyrosine. Residue Thr-321 is modified to Phosphothreonine.

Belongs to the PMP-22/EMP/MP20 family. CACNG subfamily. As to quaternary structure, the L-type calcium channel is composed of five subunits: alpha-1, alpha-2/delta, beta and gamma. Interacts with the PDZ domains of DLG4/PSD-95 and DLG1/SAP97. May interact with GOPC. Acts as an auxiliary subunit for AMPA-selective glutamate receptors (AMPARs). Found in a complex with GRIA1, GRIA2, GRIA3, GRIA4, CNIH2, CNIH3, CACNG3, CACNG4, CACNG5, CACNG7 and CACNG8. Interacts with GRIA1 and GRIA2. Interacts with MPP2. Phosphorylation of Thr-321 impairs interaction with DLG1 and DLG4. As to expression, brain.

It is found in the membrane. The protein resides in the synapse. Its subcellular location is the synaptosome. Regulates the trafficking and gating properties of AMPA-selective glutamate receptors (AMPARs). Promotes their targeting to the cell membrane and synapses and modulates their gating properties by slowing their rates of activation, deactivation and desensitization. Does not show subunit-specific AMPA receptor regulation and regulates all AMPAR subunits. Thought to stabilize the calcium channel in an inactivated (closed) state. The sequence is that of Voltage-dependent calcium channel gamma-2 subunit (CACNG2) from Homo sapiens (Human).